Consider the following 170-residue polypeptide: MAILDVLRFPDERLRTVAAPVETFTPELQHIVDDMFETMYAEEGIGLAATQVDIHQRIIVIDVSENREDPLVLINPEILEQAGSTGIEEGCLSVPDHRALVPRAEWVKVRALDRNGQPFELEADDLLAICIQHEMDHLIGKLFVDYLSPLKRQRIRQKLEKMAREDRKAL.

Cysteine 91 and histidine 133 together coordinate Fe cation. Glutamate 134 is a catalytic residue. Histidine 137 is a binding site for Fe cation.

This sequence belongs to the polypeptide deformylase family. Fe(2+) is required as a cofactor.

The enzyme catalyses N-terminal N-formyl-L-methionyl-[peptide] + H2O = N-terminal L-methionyl-[peptide] + formate. Removes the formyl group from the N-terminal Met of newly synthesized proteins. Requires at least a dipeptide for an efficient rate of reaction. N-terminal L-methionine is a prerequisite for activity but the enzyme has broad specificity at other positions. The chain is Peptide deformylase from Aeromonas salmonicida (strain A449).